The sequence spans 380 residues: Chorismate synthase (380 aa).

NADP(+) contacts are provided by R48 and R53. FMN-binding positions include 126–128 (RAS), G284, 299–303 (KPTSS), and R326.

This sequence belongs to the chorismate synthase family. It depends on FMNH2 as a cofactor.

It carries out the reaction 5-O-(1-carboxyvinyl)-3-phosphoshikimate = chorismate + phosphate. The protein operates within metabolic intermediate biosynthesis; chorismate biosynthesis; chorismate from D-erythrose 4-phosphate and phosphoenolpyruvate: step 7/7. Functionally, catalyzes the anti-1,4-elimination of the C-3 phosphate and the C-6 proR hydrogen from 5-enolpyruvylshikimate-3-phosphate (EPSP) to yield chorismate, which is the branch point compound that serves as the starting substrate for the three terminal pathways of aromatic amino acid biosynthesis. This reaction introduces a second double bond into the aromatic ring system. In Ignicoccus hospitalis (strain KIN4/I / DSM 18386 / JCM 14125), this protein is Chorismate synthase.